The following is a 61-amino-acid chain: Metallothionein-1L (61 aa).

A beta region spans residues 1-29 (MDPNCSCATGGSCSCASSCKCKECKCTSC). Cysteine 5, cysteine 7, cysteine 13, cysteine 15, cysteine 19, cysteine 21, cysteine 24, cysteine 26, cysteine 29, cysteine 33, cysteine 34, cysteine 36, cysteine 37, cysteine 41, cysteine 44, cysteine 48, cysteine 50, cysteine 57, cysteine 59, and cysteine 60 together coordinate a divalent metal cation. Positions 30–61 (KKSCCSCCPMGCAKCAQGCVCKGASEKCSCCA) are alpha.

This sequence belongs to the metallothionein superfamily. Type 1 family. In terms of assembly, monomer. Expressed in reticulocytes.

Its function is as follows. Metallothioneins have a high content of cysteine residues that bind various heavy metals; these proteins are transcriptionally regulated by both heavy metals and glucocorticoids. The polypeptide is Metallothionein-1L (MT1L) (Homo sapiens (Human)).